We begin with the raw amino-acid sequence, 137 residues long: Actin-depolymerizing factor 12 (137 aa).

Position 6 is a phosphoserine (serine 6). In terms of domain architecture, ADF-H spans 7–137 (GMAVEDECKL…SLDIIKSRAL (131 aa)).

This sequence belongs to the actin-binding proteins ADF family. In terms of tissue distribution, specifically expressed in pollen.

The protein localises to the cytoplasm. It localises to the cytoskeleton. Its function is as follows. Actin-depolymerizing protein. Severs actin filaments (F-actin) and binds to actin monomers. The chain is Actin-depolymerizing factor 12 from Arabidopsis thaliana (Mouse-ear cress).